Consider the following 199-residue polypeptide: NAD(P)H dehydrogenase (quinone) (199 aa).

Residues 4–190 (VLVLYYSSYG…AMARFQGGHV (187 aa)) enclose the Flavodoxin-like domain. FMN-binding positions include 10-15 (SSYGHI) and 78-80 (TRF). Tyr12 is an NAD(+) binding site. Trp98 contributes to the substrate binding site. FMN is bound by residues 113–119 (STATQHG) and His134.

Belongs to the WrbA family. Requires FMN as cofactor.

It carries out the reaction a quinone + NADH + H(+) = a quinol + NAD(+). The enzyme catalyses a quinone + NADPH + H(+) = a quinol + NADP(+). The protein is NAD(P)H dehydrogenase (quinone) of Azoarcus sp. (strain BH72).